Here is a 538-residue protein sequence, read N- to C-terminus: NAD(P)H-quinone oxidoreductase chain 4 (538 aa).

14 helical membrane-spanning segments follow: residues 11–31, 43–63, 95–115, 119–139, 143–163, 175–195, 217–237, 251–271, 285–305, 314–334, 340–360, 382–404, 425–445, and 472–492; these read FPWL…VPFI, YALI…FKGF, MPLI…AWPV, PKLF…VFAV, LLFF…LAIW, FIIY…AMGF, GFQL…LPIV, TAPV…YALL, FAPL…LTSF, IAYS…SFSS, AMLQ…LVGA, IMFA…SGFI, IVVA…LLSM, and IYII…PKIM.

It belongs to the complex I subunit 4 family.

It is found in the cellular thylakoid membrane. The enzyme catalyses a plastoquinone + NADH + (n+1) H(+)(in) = a plastoquinol + NAD(+) + n H(+)(out). It catalyses the reaction a plastoquinone + NADPH + (n+1) H(+)(in) = a plastoquinol + NADP(+) + n H(+)(out). NDH-1 shuttles electrons from NAD(P)H, via FMN and iron-sulfur (Fe-S) centers, to quinones in the respiratory chain. The immediate electron acceptor for the enzyme in this species is believed to be plastoquinone. Couples the redox reaction to proton translocation (for every two electrons transferred, four hydrogen ions are translocated across the cytoplasmic membrane), and thus conserves the redox energy in a proton gradient. The sequence is that of NAD(P)H-quinone oxidoreductase chain 4 from Prochlorococcus marinus (strain NATL1A).